The following is a 90-amino-acid chain: MRTMFTPITIYTQPGCRPCHRIQQFLDDAGVEYDVVDLTRNAEAKTYVQDVLKASSVPVIVTDHFEPIIGYQPDKVDELIDYYTASETGL.

Residues 1–90 form the Glutaredoxin domain; it reads MRTMFTPITI…DYYTASETGL (90 aa). A disulfide bond links Cys-16 and Cys-19.

This is Gene 56 protein (56) from Mycobacterium phage D29 (Mycobacteriophage D29).